The following is a 420-amino-acid chain: Mannose-1-phosphate guanylyltransferase regulatory subunit alpha (420 aa).

Positions 2–251 are substrate-binding domain; sequence LKAVILIGGP…DGIWSQIKSA (250 aa). GDP-alpha-D-mannose contacts are provided by Glu-85 and Gln-247. The segment at 273–420 is hexapeptide repeat domain; that stretch reads LAKHTPGGPW…SRSFTNQIIL (148 aa). The tract at residues 356-384 is C-loop; that stretch reads TPSDPNPNDPRARMDSESLFKDGKLLPAI.

The protein belongs to the transferase hexapeptide repeat family. As to quaternary structure, component of the GMPPA-GMPPB mannose-1-phosphate guanylyltransferase complex composed of 4 GMPPA subunits and 8 GMPPB subunits; the complex is organized into three layers, a central layer made up of 2 GMPPA dimers sandwiched between two layers each made up of 2 GMPPB dimers. As to expression, expressed in fibroblasts (at protein level).

It is found in the cytoplasm. Its function is as follows. Regulatory subunit of the GMPPA-GMPPB mannose-1-phosphate guanylyltransferase complex; reduces the catalytic activity of GMPPB when part of the complex. Mediates allosteric feedback inhibition of GMPPB catalytic activity upon binding GDP-alpha-D-mannose. Together with GMPPB regulates GDP-alpha-D-mannose levels. This Homo sapiens (Human) protein is Mannose-1-phosphate guanylyltransferase regulatory subunit alpha.